Here is a 278-residue protein sequence, read N- to C-terminus: HTH-type transcriptional activator RhaS (278 aa).

Residues 174–272 (NLLLAWLEDH…NWSPRDIRQG (99 aa)) enclose the HTH araC/xylS-type domain. 2 consecutive DNA-binding regions (H-T-H motif) follow at residues 191 to 212 (DAVA…KQQT) and 239 to 262 (VTDI…RREF).

As to quaternary structure, binds DNA as a dimer.

It is found in the cytoplasm. In terms of biological role, activates expression of the rhaBAD and rhaT operons. This Escherichia coli O81 (strain ED1a) protein is HTH-type transcriptional activator RhaS.